The following is a 298-amino-acid chain: UDP-N-acetylenolpyruvoylglucosamine reductase (298 aa).

The 166-residue stretch at 26–191 (KTGGPADWLA…LDATFALEPG (166 aa)) folds into the FAD-binding PCMH-type domain. Arginine 170 is a catalytic residue. Residue serine 220 is the Proton donor of the active site. Glutamate 290 is a catalytic residue.

Belongs to the MurB family. Requires FAD as cofactor.

The protein resides in the cytoplasm. It catalyses the reaction UDP-N-acetyl-alpha-D-muramate + NADP(+) = UDP-N-acetyl-3-O-(1-carboxyvinyl)-alpha-D-glucosamine + NADPH + H(+). The protein operates within cell wall biogenesis; peptidoglycan biosynthesis. Functionally, cell wall formation. This chain is UDP-N-acetylenolpyruvoylglucosamine reductase, found in Limosilactobacillus reuteri subsp. reuteri (strain JCM 1112) (Lactobacillus reuteri).